The following is a 430-amino-acid chain: MLSISQLPSFSLTTAKSLRYPSSPSSSLSIFFSFFPKVSNFVRASSGIPNLVACSPTEIIIPRVNNAGLRIEEIVDAAKGKIRLDSWISSRINGVSRARVQSSIRLGLVTVNGRVVDKVSHNVKSGDEVNCTISELQPLKAEAEDIPLDIVYEDKHVLVVNKPAHMVVHPAPGNPTGTLVNGILHHCSLPCVDYSNSEEDDDSDEETFSDDEEMTTSPSSYAASVRPGIVHRLDKGTTGLLVVAKDEHSHAHLAEQFKLHTIERVYVSLTTGVPSPPQGRIEIPIGRDSSNRIRMAAIPGGVRGGRARHAASRYKVIETFAGGGSALVEWRLETGRTHQIRAHAKYMGVPLLGDEVYGGTKSMALSLLQKRVSRSDQEEIIELISRMDRPCLHAIVLGFTHPCTGEIVKFSCPPPSDLAEIVGLLRRSGL.

A chloroplast-targeting transit peptide spans 1 to 43 (MLSISQLPSFSLTTAKSLRYPSSPSSSLSIFFSFFPKVSNFVR). The S4 RNA-binding domain maps to 82–155 (IRLDSWISSR…IPLDIVYEDK (74 aa)). The tract at residues 195 to 222 (SNSEEDDDSDEETFSDDEEMTTSPSSYA) is disordered. Residues 196-214 (NSEEDDDSDEETFSDDEEM) show a composition bias toward acidic residues. The active site involves Asp234.

The protein belongs to the pseudouridine synthase RluA family.

Its subcellular location is the plastid. The protein resides in the chloroplast. It catalyses the reaction a uridine in RNA = a pseudouridine in RNA. This Arabidopsis thaliana (Mouse-ear cress) protein is RNA pseudouridine synthase 2, chloroplastic.